A 261-amino-acid chain; its full sequence is Cytochrome c oxidase subunit 3 (261 aa).

The Mitochondrial matrix portion of the chain corresponds to 1–15 (MTHQTHAYHMVNPSP). The helical transmembrane segment at 16-34 (WPLTGALSALLMTSGLAMW) threads the bilayer. At 35-40 (FHFNST) the chain is on the mitochondrial intermembrane side. Residues 41–66 (ILLMIGLTTNTLTMYQWWRDVIREST) traverse the membrane as a helical segment. The Mitochondrial matrix segment spans residues 67–72 (FQGHHT). The chain crosses the membrane as a helical span at residues 73–105 (PTVQKGLRYGMILFIISEVLFFTGFFWAFYHSS). The Mitochondrial intermembrane portion of the chain corresponds to 106–128 (LAPTPELGGCWPPTGIHPLNPLE). Residues 129-152 (VPLLNTSVLLASGVSITWAHHSLM) form a helical membrane-spanning segment. Over 153–155 (EGN) the chain is Mitochondrial matrix. The chain crosses the membrane as a helical span at residues 156–183 (RYPMLQALFITIALGVYFTLLQASEYYE). Over 184 to 190 (APFTISD) the chain is Mitochondrial intermembrane. The helical transmembrane segment at 191–223 (GVYGSTFFVATGFHGLHVIIGSTFLIVCFFRQL) threads the bilayer. The Mitochondrial matrix portion of the chain corresponds to 224 to 232 (KFHFTSNHH). The helical transmembrane segment at 233–256 (FGFEAAAWYWHFVDVVWLFLYVSI) threads the bilayer. Over 257–261 (YWWGS) the chain is Mitochondrial intermembrane.

The protein belongs to the cytochrome c oxidase subunit 3 family. As to quaternary structure, component of the cytochrome c oxidase (complex IV, CIV), a multisubunit enzyme composed of 14 subunits. The complex is composed of a catalytic core of 3 subunits MT-CO1, MT-CO2 and MT-CO3, encoded in the mitochondrial DNA, and 11 supernumerary subunits COX4I, COX5A, COX5B, COX6A, COX6B, COX6C, COX7A, COX7B, COX7C, COX8 and NDUFA4, which are encoded in the nuclear genome. The complex exists as a monomer or a dimer and forms supercomplexes (SCs) in the inner mitochondrial membrane with NADH-ubiquinone oxidoreductase (complex I, CI) and ubiquinol-cytochrome c oxidoreductase (cytochrome b-c1 complex, complex III, CIII), resulting in different assemblies (supercomplex SCI(1)III(2)IV(1) and megacomplex MCI(2)III(2)IV(2)).

It localises to the mitochondrion inner membrane. The catalysed reaction is 4 Fe(II)-[cytochrome c] + O2 + 8 H(+)(in) = 4 Fe(III)-[cytochrome c] + 2 H2O + 4 H(+)(out). In terms of biological role, component of the cytochrome c oxidase, the last enzyme in the mitochondrial electron transport chain which drives oxidative phosphorylation. The respiratory chain contains 3 multisubunit complexes succinate dehydrogenase (complex II, CII), ubiquinol-cytochrome c oxidoreductase (cytochrome b-c1 complex, complex III, CIII) and cytochrome c oxidase (complex IV, CIV), that cooperate to transfer electrons derived from NADH and succinate to molecular oxygen, creating an electrochemical gradient over the inner membrane that drives transmembrane transport and the ATP synthase. Cytochrome c oxidase is the component of the respiratory chain that catalyzes the reduction of oxygen to water. Electrons originating from reduced cytochrome c in the intermembrane space (IMS) are transferred via the dinuclear copper A center (CU(A)) of subunit 2 and heme A of subunit 1 to the active site in subunit 1, a binuclear center (BNC) formed by heme A3 and copper B (CU(B)). The BNC reduces molecular oxygen to 2 water molecules using 4 electrons from cytochrome c in the IMS and 4 protons from the mitochondrial matrix. The sequence is that of Cytochrome c oxidase subunit 3 (MT-CO3) from Raphicerus campestris (Steenbok).